The primary structure comprises 392 residues: 6-aminohexanoate-dimer hydrolase (392 aa).

The interval 1-22 (MNARSTGQHPARYPGAAAGEPT) is disordered. Residue serine 112 is part of the active site.

The catalysed reaction is [N-(6-aminohexanoyl)](n) + H2O = [N-(6-aminohexanoyl)](n-1) + 6-aminohexanoate. The enzyme catalyses N-(6-aminohexanoyl)-6-aminohexanoate + H2O = 2 6-aminohexanoate. It participates in xenobiotic degradation; nylon-6 oligomer degradation. In terms of biological role, involved in nylon oligomer degradation. The protein is 6-aminohexanoate-dimer hydrolase of Paenarthrobacter ureafaciens.